Here is a 774-residue protein sequence, read N- to C-terminus: Potassium/sodium hyperpolarization-activated cyclic nucleotide-gated channel 3 (774 aa).

The tract at residues 1-48 is disordered; sequence MEAEQRPAAGASEGATPGLEAVPPVAPPPATAASGPIPKSGPEPKRRH. Residues 1–97 lie on the Cytoplasmic side of the membrane; the sequence is MEAEQRPAAG…PYSDFRFYWD (97 aa). An involved in subunit assembly region spans residues 46–91; it reads RRHLGTLLQPTVNKFSLRVFGSHKAVEIEQERVKSAGAWIIHPYSD. The chain crosses the membrane as a helical span at residues 98 to 118; it reads LIMLLLMVGNLIVLPVGITFF. The Extracellular segment spans residues 119–124; it reads KEENSP. A helical transmembrane segment spans residues 125 to 145; that stretch reads PWIVFNVLSDTFFLLDLVLNF. The Cytoplasmic segment spans residues 146–171; it reads RTGIVVEEGAEILLAPRAIRTRYLRT. A helical membrane pass occupies residues 172-192; sequence WFLVDLISSIPVDYIFLVVEL. Residues 193-201 are Extracellular-facing; that stretch reads EPRLDAEVY. The helical; Voltage-sensor transmembrane segment at 202 to 222 threads the bilayer; it reads KTARALRIVRFTKILSLLRLL. At 223 to 253 the chain is on the cytoplasmic side; that stretch reads RLSRLIRYIHQWEEIFHMTYDLASAVVRIFN. Residues 254 to 274 traverse the membrane as a helical segment; sequence LIGMMLLLCHWDGCLQFLVPM. At 275 to 297 the chain is on the extracellular side; sequence LQDFPPDCWVSINHMVNHSWGRQ. Asn-291 is a glycosylation site (N-linked (GlcNAc...) asparagine). The segment at residues 298-319 is an intramembrane region (pore-forming); that stretch reads YSHALFKAMSHMLCIGYGQQAP. Over 320–329 the chain is Extracellular; the sequence is VGMPDVWLTM. The helical transmembrane segment at 330–350 threads the bilayer; that stretch reads LSMIVGATCYAMFIGHATALI. The Cytoplasmic segment spans residues 351 to 774; the sequence is QSLDSSRRQY…PRGLQLSANM (424 aa). The segment at 354 to 774 is interaction with KCTD3; sequence DSSRRQYQEK…PRGLQLSANM (421 aa). 3',5'-cyclic AMP is bound by residues Gly-492, Glu-493, Cys-495, Arg-502, Thr-503, Arg-543, and Arg-546. Ser-634 bears the Phosphoserine mark. Residues 682 to 774 are disordered; it reads SLSRAGRSQV…PRGLQLSANM (93 aa). The span at 751-763 shows a compositional bias: pro residues; it reads TAQPPRPPVPEPA.

The protein belongs to the potassium channel HCN family. Homotetramer. The potassium channel is composed of a homo- or heterotetrameric complex of pore-forming subunits. Interacts with HCN11. Interacts with KCTD3; this interaction increases cell surface expression and current density of this channel. Interacts with PEX5L. Detected in brain.

It is found in the cell membrane. The enzyme catalyses K(+)(in) = K(+)(out). It catalyses the reaction Na(+)(in) = Na(+)(out). Unlike HCN2 and HCN4, HCN3 is insensitive to cyclic nucleotides, such as cAMP or cGMP. This lack of sensitivity of HCN3, despite harboring a functional cyclic nucleotide-binding domain (CNBD), may be explained by its shorter C-terminal sequence, which may alter the normal autoinhibition of the channel. Inhibited by Cs(1+) and ZD7288. Phosphatidylinositol-4,5-bisphosphate (PIP(2)) shifts HCN3 activation to more depolarized potentials and accelerated activation kinetics. Functionally, hyperpolarization-activated ion channel that are permeable to sodium and potassium ions, with an about 3:1 preference for potassium ions. Contributes to the native pacemaker currents in heart (If) and in neurons (Ih). In particular, plays a pivotal role in maintaining excitability and promoting rhythmic burst firing within hypothalamic nuclei. Exerts a significant influence on the configuration of the cardiac action potential waveform. Does not appear to play a prominent role in the processing of acute, neuropathic, or inflammatory pain. This Homo sapiens (Human) protein is Potassium/sodium hyperpolarization-activated cyclic nucleotide-gated channel 3 (HCN3).